A 107-amino-acid chain; its full sequence is U1-lycotoxin-Ls1b (107 aa).

The signal sequence occupies residues 1–20 (MMKVLVVVALLVTHISYSSS). Residues 21–41 (EGIDDLEADELLSLMANEQTR) constitute a propeptide that is removed on maturation. 4 disulfides stabilise this stretch: Cys44/Cys59, Cys51/Cys68, Cys58/Cys86, and Cys70/Cys84.

Belongs to the neurotoxin 19 (CSTX) family. 04 (U1-Lctx) subfamily. In terms of tissue distribution, expressed by the venom gland.

Its subcellular location is the secreted. This Lycosa singoriensis (Wolf spider) protein is U1-lycotoxin-Ls1b.